Here is a 1755-residue protein sequence, read N- to C-terminus: Transposon Ty1-ML2 Gag-Pol polyprotein (1755 aa).

Positions 1-16 (MESQQLSQHSHISHGS) are enriched in low complexity. Disordered regions lie at residues 1–93 (MESQ…MMTQ), 126–173 (PQSQ…RPPP), and 352–421 (GSRN…SKST). 2 stretches are compositionally biased toward polar residues: residues 48 to 60 (TKAN…TPAS) and 127 to 152 (QSQF…GNTF). Low complexity predominate over residues 153–165 (TDSSSADSDMTST). Residues 299–401 (NNGIHINNKV…NSKSKTARAH (103 aa)) are RNA-binding. Residues 402 to 418 (NVSTSNNSPSTDNDSIS) show a composition bias toward low complexity. A Phosphoserine modification is found at Ser-416. The active-site For protease activity; shared with dimeric partner is Asp-461. The integrase-type zinc finger-like stretch occupies residues 583-640 (NVHTSESTRKYPYPFIHRMLAHANAQTIRYSLKNNTITYFNESDVDRSSAIDYQCPDC). The 176-residue stretch at 660 to 835 (NSYEPFQYLH…AGLDISTLLP (176 aa)) folds into the Integrase catalytic domain. Residues Asp-671 and Asp-736 each contribute to the Mg(2+) site. 3 disordered regions span residues 956-1087 (SKAV…ETEK), 1092-1111 (RSPS…NIVP), and 1130-1171 (DLPL…DSNA). Residues 960–969 (SPTDSTPPST) are compositionally biased toward low complexity. The segment covering 1005-1015 (STPQISNIEST) has biased composition (polar residues). A compositionally biased stretch (basic and acidic residues) spans 1038-1053 (ESSHASKSKDFRHSDS). Polar residues-rich tracts occupy residues 1054 to 1082 (YSEN…QISD) and 1101 to 1111 (PENNSSHNIVP). A Bipartite nuclear localization signal motif is present at residues 1178–1212 (KKRSLEDNETEIKVSRDTWNTKNMRSLEPPRSKKR). The 139-residue stretch at 1338–1476 (NNYYITQLDI…DILGLEIKYQ (139 aa)) folds into the Reverse transcriptase Ty1/copia-type domain. Positions 1346, 1427, 1428, 1610, 1652, and 1685 each coordinate Mg(2+). The RNase H Ty1/copia-type domain occupies 1610-1752 (DASYGNQPYY…IKTFKLLTNK (143 aa)).

The capsid protein forms a homotrimer, from which the VLPs are assembled. The protease is a homodimer, whose active site consists of two apposed aspartic acid residues. Initially, virus-like particles (VLPs) are composed of the structural unprocessed proteins Gag and Gag-Pol, and also contain the host initiator methionine tRNA (tRNA(i)-Met) which serves as a primer for minus-strand DNA synthesis, and a dimer of genomic Ty RNA. Processing of the polyproteins occurs within the particle and proceeds by an ordered pathway, called maturation. First, the protease (PR) is released by autocatalytic cleavage of the Gag-Pol polyprotein yielding capsid protein p45 and a Pol-p154 precursor protein. This cleavage is a prerequisite for subsequent processing of Pol-p154 at the remaining sites to release the mature structural and catalytic proteins. Maturation takes place prior to the RT reaction and is required to produce transposition-competent VLPs.

The protein resides in the cytoplasm. The protein localises to the nucleus. The catalysed reaction is DNA(n) + a 2'-deoxyribonucleoside 5'-triphosphate = DNA(n+1) + diphosphate. It carries out the reaction Endonucleolytic cleavage to 5'-phosphomonoester.. Functionally, capsid protein (CA) is the structural component of the virus-like particle (VLP), forming the shell that encapsulates the retrotransposons dimeric RNA genome. The particles are assembled from trimer-clustered units and there are holes in the capsid shells that allow for the diffusion of macromolecules. CA also has nucleocapsid-like chaperone activity, promoting primer tRNA(i)-Met annealing to the multipartite primer-binding site (PBS), dimerization of Ty1 RNA and initiation of reverse transcription. In terms of biological role, the aspartyl protease (PR) mediates the proteolytic cleavages of the Gag and Gag-Pol polyproteins after assembly of the VLP. Reverse transcriptase/ribonuclease H (RT) is a multifunctional enzyme that catalyzes the conversion of the retro-elements RNA genome into dsDNA within the VLP. The enzyme displays a DNA polymerase activity that can copy either DNA or RNA templates, and a ribonuclease H (RNase H) activity that cleaves the RNA strand of RNA-DNA heteroduplexes during plus-strand synthesis and hydrolyzes RNA primers. The conversion leads to a linear dsDNA copy of the retrotransposon that includes long terminal repeats (LTRs) at both ends. Its function is as follows. Integrase (IN) targets the VLP to the nucleus, where a subparticle preintegration complex (PIC) containing at least integrase and the newly synthesized dsDNA copy of the retrotransposon must transit the nuclear membrane. Once in the nucleus, integrase performs the integration of the dsDNA into the host genome. This Saccharomyces cerevisiae (strain ATCC 204508 / S288c) (Baker's yeast) protein is Transposon Ty1-ML2 Gag-Pol polyprotein (TY1B-ML2).